We begin with the raw amino-acid sequence, 874 residues long: Alanine--tRNA ligase (874 aa).

Positions 563, 567, 665, and 669 each coordinate Zn(2+).

The protein belongs to the class-II aminoacyl-tRNA synthetase family. The cofactor is Zn(2+).

The protein resides in the cytoplasm. It carries out the reaction tRNA(Ala) + L-alanine + ATP = L-alanyl-tRNA(Ala) + AMP + diphosphate. Functionally, catalyzes the attachment of alanine to tRNA(Ala) in a two-step reaction: alanine is first activated by ATP to form Ala-AMP and then transferred to the acceptor end of tRNA(Ala). Also edits incorrectly charged Ser-tRNA(Ala) and Gly-tRNA(Ala) via its editing domain. The sequence is that of Alanine--tRNA ligase from Actinobacillus pleuropneumoniae serotype 7 (strain AP76).